We begin with the raw amino-acid sequence, 426 residues long: 3-phosphoshikimate 1-carboxyvinyltransferase (426 aa).

The 3-phosphoshikimate site is built by lysine 21, serine 22, and arginine 26. Lysine 21 provides a ligand contact to phosphoenolpyruvate. Residues glycine 91 and arginine 119 each contribute to the phosphoenolpyruvate site. 3-phosphoshikimate contacts are provided by serine 162, serine 163, glutamine 164, serine 190, aspartate 304, and lysine 331. Glutamine 164 is a binding site for phosphoenolpyruvate. The Proton acceptor role is filled by aspartate 304. Arginine 335, arginine 377, and lysine 403 together coordinate phosphoenolpyruvate.

Belongs to the EPSP synthase family. Monomer.

The protein resides in the cytoplasm. The catalysed reaction is 3-phosphoshikimate + phosphoenolpyruvate = 5-O-(1-carboxyvinyl)-3-phosphoshikimate + phosphate. The protein operates within metabolic intermediate biosynthesis; chorismate biosynthesis; chorismate from D-erythrose 4-phosphate and phosphoenolpyruvate: step 6/7. Functionally, catalyzes the transfer of the enolpyruvyl moiety of phosphoenolpyruvate (PEP) to the 5-hydroxyl of shikimate-3-phosphate (S3P) to produce enolpyruvyl shikimate-3-phosphate and inorganic phosphate. The protein is 3-phosphoshikimate 1-carboxyvinyltransferase of Clostridium kluyveri (strain ATCC 8527 / DSM 555 / NBRC 12016 / NCIMB 10680 / K1).